The chain runs to 375 residues: Ribosomal RNA large subunit methyltransferase G (375 aa).

This sequence belongs to the methyltransferase superfamily. RlmG family.

It localises to the cytoplasm. It catalyses the reaction guanosine(1835) in 23S rRNA + S-adenosyl-L-methionine = N(2)-methylguanosine(1835) in 23S rRNA + S-adenosyl-L-homocysteine + H(+). Functionally, specifically methylates the guanine in position 1835 (m2G1835) of 23S rRNA. The protein is Ribosomal RNA large subunit methyltransferase G of Erwinia tasmaniensis (strain DSM 17950 / CFBP 7177 / CIP 109463 / NCPPB 4357 / Et1/99).